The chain runs to 60 residues: Pepsin A (60 aa).

A propeptide spans 1–45 (activation peptide); that stretch reads FIIKVPLVKKKSLRKNLKEHGLLKDFLKKHSPNPASKYFPQEAAV.

This sequence belongs to the peptidase A1 family.

It localises to the secreted. The catalysed reaction is Preferential cleavage: hydrophobic, preferably aromatic, residues in P1 and P1' positions. Cleaves 1-Phe-|-Val-2, 4-Gln-|-His-5, 13-Glu-|-Ala-14, 14-Ala-|-Leu-15, 15-Leu-|-Tyr-16, 16-Tyr-|-Leu-17, 23-Gly-|-Phe-24, 24-Phe-|-Phe-25 and 25-Phe-|-Tyr-26 bonds in the B chain of insulin.. Shows particularly broad specificity; although bonds involving phenylalanine and leucine are preferred, many others are also cleaved to some extent. The protein is Pepsin A (PGA) of Ursus thibetanus (Asiatic black bear).